The following is a 106-amino-acid chain: Integration host factor subunit alpha (106 aa).

This sequence belongs to the bacterial histone-like protein family. As to quaternary structure, heterodimer of an alpha and a beta chain.

Functionally, this protein is one of the two subunits of integration host factor, a specific DNA-binding protein that functions in genetic recombination as well as in transcriptional and translational control. This Nitrobacter winogradskyi (strain ATCC 25391 / DSM 10237 / CIP 104748 / NCIMB 11846 / Nb-255) protein is Integration host factor subunit alpha.